The following is a 347-amino-acid chain: Ribosomal RNA small subunit methyltransferase C (347 aa).

The protein belongs to the methyltransferase superfamily. RsmC family. As to quaternary structure, monomer.

Its subcellular location is the cytoplasm. The enzyme catalyses guanosine(1207) in 16S rRNA + S-adenosyl-L-methionine = N(2)-methylguanosine(1207) in 16S rRNA + S-adenosyl-L-homocysteine + H(+). Its function is as follows. Specifically methylates the guanine in position 1207 of 16S rRNA in the 30S particle. This is Ribosomal RNA small subunit methyltransferase C from Serratia proteamaculans (strain 568).